The sequence spans 317 residues: Osteopontin (317 aa).

The signal sequence occupies residues M1–C16. Phosphoserine occurs at positions 26, 27, 60, 62, and 63. The tract at residues W43–D297 is disordered. Positions S49–S63 are enriched in polar residues. At T66 the chain carries Phosphothreonine. S76, S78, S81, S106, S109, S112, S115, and S118 each carry phosphoserine. Residues D86–D110 show a composition bias toward acidic residues. O-linked (GalNAc...) threonine glycans are attached at residues T123, T132, and T137. A Cell attachment site motif is present at residues R144–D146. 2 positions are modified to phosphothreonine: T170 and T175. A compositionally biased stretch (basic and acidic residues) spans L174–I187. A phosphoserine mark is found at S176, S180, S200, S204, S209, S213, and S219. Over residues S197–D216 the composition is skewed to polar residues. O-linked (Xyl...) (chondroitin sulfate) serine glycosylation occurs at S219. T222 carries the phosphothreonine modification. 2 stretches are compositionally biased toward basic and acidic residues: residues H223 to T240 and S248 to A263. Phosphoserine occurs at positions 224, 228, 257, 261, 266, 270, 273, 278, 283, 294, 306, 311, 313, and 314. The segment covering S273 to D297 has biased composition (basic and acidic residues). A glycan (O-linked (Xyl...) (chondroitin sulfate) serine) is linked at S311.

It belongs to the osteopontin family. Interacts (via N-terminus) with integrin ITGA9:ITGB1. In terms of processing, extensively phosphorylated by FAM20C in the extracellular medium at multiple sites within the S-x-E/pS motif. The phosphorylated form inhibits hydroxyapatite crystallization. Dephosphorylation via a mechanism involving ALPL/TNAP promotes hydroxyapatite crystallization. O-glycosylated. Post-translationally, forms covalent cross-links mediated by transglutaminase TGM2, between a glutamine and the epsilon-amino group of a lysine residue, forming homopolymers and heteropolymers, increasing its collagen binding properties.

The protein resides in the secreted. Major non-collagenous bone protein that binds tightly to hydroxyapatite. Appears to form an integral part of the mineralized matrix. Probably important to cell-matrix interaction. In terms of biological role, acts as a cytokine involved in enhancing production of interferon-gamma and interleukin-12 and reducing production of interleukin-10 and is essential in the pathway that leads to type I immunity. The chain is Osteopontin (Spp1) from Rattus norvegicus (Rat).